Reading from the N-terminus, the 356-residue chain is Dihydroorotate dehydrogenase (quinone) (356 aa).

Residues 66-70 (AGFDK) and T90 each bind FMN. Position 70 (K70) interacts with substrate. 115–119 (NRMGF) contacts substrate. N143 and N176 together coordinate FMN. N176 contributes to the substrate binding site. Catalysis depends on S179, which acts as the Nucleophile. N181 contacts substrate. K212 and T240 together coordinate FMN. 241–242 (NT) is a substrate binding site. Residues G264, G293, and 314-315 (YT) contribute to the FMN site.

It belongs to the dihydroorotate dehydrogenase family. Type 2 subfamily. Monomer. Requires FMN as cofactor.

Its subcellular location is the cell membrane. It catalyses the reaction (S)-dihydroorotate + a quinone = orotate + a quinol. It functions in the pathway pyrimidine metabolism; UMP biosynthesis via de novo pathway; orotate from (S)-dihydroorotate (quinone route): step 1/1. Functionally, catalyzes the conversion of dihydroorotate to orotate with quinone as electron acceptor. The polypeptide is Dihydroorotate dehydrogenase (quinone) (pyrD) (Mycobacterium leprae (strain TN)).